The chain runs to 285 residues: Vesicle-associated membrane protein 725 (285 aa).

Over 1-261 (MDRSVVPISL…MWFENMKIKL (261 aa)) the chain is Cytoplasmic. The Longin domain occupies 75-179 (FVARGTVILV…SLNREFGSKL (105 aa)). Positions 195–255 (KLAKVKAQVT…TKIRRKMWFE (61 aa)) constitute a v-SNARE coiled-coil homology domain. Residues 262–282 (IVLGIIITLILIIILSVCGGF) form a helical; Anchor for type IV membrane protein membrane-spanning segment. Residues 283–285 (KCT) lie on the Vesicular side of the membrane.

It belongs to the synaptobrevin family. As to expression, expressed in flowers, leaves, stems and roots.

It localises to the cell membrane. Its subcellular location is the early endosome membrane. In terms of biological role, involved in the targeting and/or fusion of transport vesicles to their target membrane. The polypeptide is Vesicle-associated membrane protein 725 (Arabidopsis thaliana (Mouse-ear cress)).